The primary structure comprises 171 residues: 2-C-methyl-D-erythritol 2,4-cyclodiphosphate synthase (171 aa).

A divalent metal cation contacts are provided by D8 and H10. Residues 8–10 and 34–35 contribute to the 4-CDP-2-C-methyl-D-erythritol 2-phosphate site; these read DVH and HS. H42 lines the a divalent metal cation pocket. Residues 56-58, 61-65, 132-135, F139, and R142 contribute to the 4-CDP-2-C-methyl-D-erythritol 2-phosphate site; these read DIG, FPDTD, and TTTE.

This sequence belongs to the IspF family. Homotrimer. It depends on a divalent metal cation as a cofactor.

The catalysed reaction is 4-CDP-2-C-methyl-D-erythritol 2-phosphate = 2-C-methyl-D-erythritol 2,4-cyclic diphosphate + CMP. It functions in the pathway isoprenoid biosynthesis; isopentenyl diphosphate biosynthesis via DXP pathway; isopentenyl diphosphate from 1-deoxy-D-xylulose 5-phosphate: step 4/6. Involved in the biosynthesis of isopentenyl diphosphate (IPP) and dimethylallyl diphosphate (DMAPP), two major building blocks of isoprenoid compounds. Catalyzes the conversion of 4-diphosphocytidyl-2-C-methyl-D-erythritol 2-phosphate (CDP-ME2P) to 2-C-methyl-D-erythritol 2,4-cyclodiphosphate (ME-CPP) with a corresponding release of cytidine 5-monophosphate (CMP). The protein is 2-C-methyl-D-erythritol 2,4-cyclodiphosphate synthase of Geotalea daltonii (strain DSM 22248 / JCM 15807 / FRC-32) (Geobacter daltonii).